A 596-amino-acid polypeptide reads, in one-letter code: Ubiquilin-4 (596 aa).

In terms of domain architecture, Ubiquitin-like spans 13 to 87 (IRVTVKTPKD…VHLVIKTPQK (75 aa)). Glycyl lysine isopeptide (Lys-Gly) (interchain with G-Cter in SUMO2) cross-links involve residues Lys23 and Lys62. A disordered region spans residues 89-148 (QDPVTAAASPPSTPDSASAPSTTPASPAAAPVQPCSSGNTTSDAGSGGGPSPVAAEGPSS). Composition is skewed to low complexity over residues 93 to 119 (TAAASPPSTPDSASAPSTTPASPAAAP) and 139 to 148 (SPVAAEGPSS). Residue Ser139 is modified to Phosphoserine. 2 consecutive STI1 domains span residues 187 to 224 (NPEMLSQIMENPLVQDMMSNPDLMRHMIMANPQMQQLM) and 225 to 256 (ERNPEISHMLNNPELMRQTMELARNPAMMQEM). At Thr282 the chain carries Phosphothreonine. Residues 297 to 361 (GNNPFSSLAG…QVHPTVSNPF (65 aa)) form a disordered region. The segment covering 302 to 313 (SSLAGNSDNSSS) has biased composition (low complexity). Ser313 is modified (phosphoserine). Residues 324 to 335 (LPNPWSPSPPTS) are compositionally biased toward pro residues. Residues 339–349 (GSGGEGTGGSG) show a composition bias toward gly residues. Polar residues predominate over residues 352–361 (QVHPTVSNPF). STI1 domains are found at residues 388 to 435 (NPQL…QEQL) and 439 to 471 (LPVFLQQMQNPESLSILTNPRAMQALLQIQQGL). Residues 482–528 (VPSLGSFGTPRTSVPLAGSNSGSSAEAPTSSPGVPATSPPSAGSNAQ) form a disordered region. Residues 499–513 (GSNSGSSAEAPTSSP) are compositionally biased toward polar residues. The UBA domain maps to 548-593 (PMPEVRFQQQLEQLNSMGFINREANLQALIATGGDINAAIERLLGS).

Homooligomer. Binds signal sequences of proteins that are targeted to the endoplasmic reticulum. Interacts (via UBA domain) with GJA1 (not ubiquitinated) and with ubiquitin; both compete for the same binding site. Interacts (via UBA domain) with ubiquitin and with polyubiquitin chains. Interacts (via ubiquitin-like domain) with PSMD2 and PSMD4, regulatory subunits of the 26S proteasome. Interacts with ATXN1/SCA1; interaction with ATXN1 inhibits polyubiquitination of UBQLN4 and interferes with PSMD4 binding. Interacts with HERPUD1. Interacts (via ubiquitin-like domain) with UBQLN1 (via UBA domain). Interacts with UBQLN2. Interacts (via STI1 1 and 2 domains) with MAP1LC3A/B/C. Interacts with BAG6. Interacts with MRE11 (when ubiquitinated); interaction with ubiquitinated MRE11 leads to MRE11 removal from chromatin. Interacts with DESI1/POST; leading to nuclear export. Interacts with BCL2A1 and BCL2L10. Phosphorylated by ATM at Ser-313 in response to DNA damage, leading to localization in the nucleus and recruitment to sites of DNA damage. Post-translationally, ubiquitinated; this does not lead to proteasomal degradation. May undergo both 'Lys-48'- and 'Lys-63'-linked polyubiquitination. As to expression, detected in testis, ovary, thyroid, kidney, thymus, heart, liver, lung and spleen (at protein level). Highly expressed in heart, skeletal muscle, kidney, liver and brain. Detected at lower levels in testis, lung and spleen.

Its subcellular location is the nucleus. It is found in the cytoplasm. The protein localises to the chromosome. The protein resides in the endoplasmic reticulum. It localises to the perinuclear region. Its subcellular location is the cytoplasmic vesicle. It is found in the autophagosome. Functionally, regulator of protein degradation that mediates the proteasomal targeting of misfolded, mislocalized or accumulated proteins. Acts by binding polyubiquitin chains of target proteins via its UBA domain and by interacting with subunits of the proteasome via its ubiquitin-like domain. Key regulator of DNA repair that represses homologous recombination repair: in response to DNA damage, recruited to sites of DNA damage following phosphorylation by ATM and acts by binding and removing ubiquitinated MRE11 from damaged chromatin, leading to MRE11 degradation by the proteasome. MRE11 degradation prevents homologous recombination repair, redirecting double-strand break repair toward non-homologous end joining (NHEJ). Specifically recognizes and binds mislocalized transmembrane-containing proteins and targets them to proteasomal degradation. Collaborates with DESI1/POST in the export of ubiquitinated proteins from the nucleus to the cytoplasm. Plays a role in the regulation of the proteasomal degradation of non-ubiquitinated GJA1. Acts as an adapter protein that recruits UBQLN1 to the autophagy machinery. Mediates the association of UBQLN1 with autophagosomes and the autophagy-related protein LC3 (MAP1LC3A/B/C) and may assist in the maturation of autophagosomes to autolysosomes by mediating autophagosome-lysosome fusion. The chain is Ubiquilin-4 from Mus musculus (Mouse).